Reading from the N-terminus, the 259-residue chain is HTH-type transcriptional regulator TtgV (259 aa).

One can recognise an HTH iclR-type domain in the interval 14–76 (IQVIARAASI…GPAGGFRLGP (63 aa)). A DNA-binding region (H-T-H motif) is located at residues 36–59 (LAAIAQLVGLPRSTVQRIINALEE). The IclR-ED domain maps to 89–253 (ILSLVKPYLR…KLNIERAIGR (165 aa)).

Its function is as follows. Represses the expression of the ttgGHI and ttgVW operons. Binds to the ttgGHI / ttgVW intergenic region, probably preventing binding of RNA polymerase; ttgV dissociates from this region in the presence of 1-hexanol. In Pseudomonas putida (strain DOT-T1E), this protein is HTH-type transcriptional regulator TtgV (ttgV).